We begin with the raw amino-acid sequence, 205 residues long: Outer-membrane lipoprotein carrier protein (205 aa).

Positions 1–21 are cleaved as a signal peptide; it reads MRFLAVATMVVALMVPWSVRA.

This sequence belongs to the LolA family. Monomer.

It localises to the periplasm. Its function is as follows. Participates in the translocation of lipoproteins from the inner membrane to the outer membrane. Only forms a complex with a lipoprotein if the residue after the N-terminal Cys is not an aspartate (The Asp acts as a targeting signal to indicate that the lipoprotein should stay in the inner membrane). This chain is Outer-membrane lipoprotein carrier protein, found in Methylobacillus flagellatus (strain ATCC 51484 / DSM 6875 / VKM B-1610 / KT).